Reading from the N-terminus, the 179-residue chain is Large ribosomal subunit protein uL6 (179 aa).

This sequence belongs to the universal ribosomal protein uL6 family. Part of the 50S ribosomal subunit.

Its function is as follows. This protein binds to the 23S rRNA, and is important in its secondary structure. It is located near the subunit interface in the base of the L7/L12 stalk, and near the tRNA binding site of the peptidyltransferase center. The polypeptide is Large ribosomal subunit protein uL6 (Desulfovibrio desulfuricans (strain ATCC 27774 / DSM 6949 / MB)).